The primary structure comprises 396 residues: Phosphoglycerate kinase (396 aa).

Residues 21–23, R36, 59–62, R118, and R151 each bind substrate; these read DFN and HLGR. ATP contacts are provided by residues K201, G292, E323, and 349-352; that span reads GGDS.

Belongs to the phosphoglycerate kinase family. Monomer.

It localises to the cytoplasm. It carries out the reaction (2R)-3-phosphoglycerate + ATP = (2R)-3-phospho-glyceroyl phosphate + ADP. The protein operates within carbohydrate degradation; glycolysis; pyruvate from D-glyceraldehyde 3-phosphate: step 2/5. The sequence is that of Phosphoglycerate kinase from Leptospira biflexa serovar Patoc (strain Patoc 1 / Ames).